The following is a 469-amino-acid chain: IAA-alanine resistance protein 1 (469 aa).

A signal peptide spans 1 to 28; the sequence is MSFSLRKLLVPILVLVLFLDLCVESGFS. The interval 33–58 is disordered; it reads ARDDHVHHHGGGCSHSHDHDHDHDHD. A compositionally biased stretch (basic and acidic residues) spans 47-58; that stretch reads HSHDHDHDHDHD. A run of 2 helical transmembrane segments spans residues 114–134 and 141–161; these read CSLL…IMFV and WFVD…AFLH. Residues 170-197 are disordered; sequence GHSHSNDHHENHDHHDHSHSDSPSHSHS. A compositionally biased stretch (basic and acidic residues) spans 173 to 193; it reads HSNDHHENHDHHDHSHSDSPS. A helical transmembrane segment spans residues 201 to 221; the sequence is LSVGLSVLAGIVVFLLVEKLV. The interval 228–315 is disordered; it reads SSGSNTWGHH…GKSDKPEQVE (88 aa). Basic residues predominate over residues 235–246; that stretch reads GHHHHHHHAGSK. Residues 247–256 show a composition bias toward basic and acidic residues; that stretch reads KLKDEGDHNN. Positions 257–279 are enriched in polar residues; sequence LDQQSSSDAIVNSSEKVSGGSTD. Residues 292–315 show a composition bias toward basic and acidic residues; the sequence is ATDKSDSGTEITSDGKSDKPEQVE. 3 consecutive transmembrane segments (helical) span residues 387–407, 415–435, and 448–468; these read LFFN…VLVW, SLIE…GVLA, and SACH…ISLI.

It belongs to the ZIP transporter (TC 2.A.5) family. KE4/Catsup subfamily.

Its subcellular location is the membrane. May participate in auxin metabolism or response. Probable transporter. The sequence is that of IAA-alanine resistance protein 1 (IAR1) from Arabidopsis thaliana (Mouse-ear cress).